Here is a 782-residue protein sequence, read N- to C-terminus: Hypersensitive to pore-forming toxin protein 40 (782 aa).

The Tudor; degenerate domain occupies 138-203; that stretch reads ESEIVPGAMY…TLFVSDQFSI (66 aa). Composition is skewed to polar residues over residues 332 to 346 and 413 to 443; these read SVNPVASSHPTSSSM and FESTKSDISPQNNQNVEETSTPTVPPNSTIQ. 4 disordered regions span residues 332–351, 413–448, 472–492, and 617–672; these read SVNPVASSHPTSSSMDDCPY, FESTKSDISPQNNQNVEETSTPTVPPNSTIQENEED, IERPNTPLPTSSKNSEHNMSE, and VAQG…LEDP. Residues 617 to 634 show a composition bias toward polar residues; it reads VAQGSNAPKTAPNDSVNS. Positions 638 to 662 are enriched in basic and acidic residues; it reads DDIHETDKRGNHCKSVTEDPKDNKD.

It is found in the cytoplasm. Its subcellular location is the perinuclear region. In Caenorhabditis elegans, this protein is Hypersensitive to pore-forming toxin protein 40.